The primary structure comprises 85 residues: Large ribosomal subunit protein bL27 (85 aa).

Belongs to the bacterial ribosomal protein bL27 family.

This is Large ribosomal subunit protein bL27 from Leptospira biflexa serovar Patoc (strain Patoc 1 / Ames).